The chain runs to 273 residues: MQDLQKIIDDAFENRANLSPSAAPAAVRDAVASVIAGLDAGRLRVAEKIDGNWTVNQWIKKAVLISFRLADNEVMAGGTNQYFDKVPTKFGDYTPEQFREGGFRVVPPAVARRGSFIGRNVVLMPSYVNIGAYVDEGTMVDTWATVGSCAQIGKNVHLSGGVGIGGVLEPVQAGPVIIEDNVFVGARSEVVEGVIIEENAVLSMGVYIGQSTKIYDRATGEVTYGRVPSGAVVVPGSLPSADGKYSLYCAVIVKRVDAQTRAKTGINELLRGA.

Substrate-binding residues include Arg104 and Asp141.

It belongs to the transferase hexapeptide repeat family. As to quaternary structure, homotrimer.

It localises to the cytoplasm. It catalyses the reaction (S)-2,3,4,5-tetrahydrodipicolinate + succinyl-CoA + H2O = (S)-2-succinylamino-6-oxoheptanedioate + CoA. It participates in amino-acid biosynthesis; L-lysine biosynthesis via DAP pathway; LL-2,6-diaminopimelate from (S)-tetrahydrodipicolinate (succinylase route): step 1/3. This chain is 2,3,4,5-tetrahydropyridine-2,6-dicarboxylate N-succinyltransferase, found in Aromatoleum aromaticum (strain DSM 19018 / LMG 30748 / EbN1) (Azoarcus sp. (strain EbN1)).